Here is a 318-residue protein sequence, read N- to C-terminus: Bifunctional protein FolD 3 (318 aa).

Residues 173-175 (GRS) and Ile242 each bind NADP(+).

Belongs to the tetrahydrofolate dehydrogenase/cyclohydrolase family. As to quaternary structure, homodimer.

The enzyme catalyses (6R)-5,10-methylene-5,6,7,8-tetrahydrofolate + NADP(+) = (6R)-5,10-methenyltetrahydrofolate + NADPH. The catalysed reaction is (6R)-5,10-methenyltetrahydrofolate + H2O = (6R)-10-formyltetrahydrofolate + H(+). It participates in one-carbon metabolism; tetrahydrofolate interconversion. Functionally, catalyzes the oxidation of 5,10-methylenetetrahydrofolate to 5,10-methenyltetrahydrofolate and then the hydrolysis of 5,10-methenyltetrahydrofolate to 10-formyltetrahydrofolate. The chain is Bifunctional protein FolD 3 from Rubrobacter xylanophilus (strain DSM 9941 / JCM 11954 / NBRC 16129 / PRD-1).